Here is a 623-residue protein sequence, read N- to C-terminus: MCGIVGYIGQAGDTRNYYALDVVLEGLRRLEYRGYDSAGVAVYADGEISFRKKAGKVAALETEIARAPLPDSVLGIGHTRWATHGGPTDVNAHPHVVAGGRLAVVHNGIIENFSELRAELTAKGYNFVSSTDTEVAATLLAEIYKTEAEGDLTRAMQLTGQRLDGAFTLLAIHVDHPDRIVAARRNSPLVIGLGEGENFLGSDVSGFIDYTRSAVELSNDQVVTITADSYEITDFHGAPSEGKPFAVEWDAAAAEKGGFHSFMDKEIHDQPAAVRDTLLGRMDEDGKLMLDELRIDESILRSVDKIIVVACGTAAYAGQVARYAIEHWCRIPTEVELAHEFRYRDPIVNEKTLVVALSQSGETMDTLMAVRHAREQGAKVVAICNTVGSTLPREADACLYTYAGPEIAVASTKAFLAQITASYLLGLYLAQLRGNKFADEVRVILDSLREMPAKIQEVIDNEEQIKQLGRSMVDAKSVLFLGRHVGYPVALEGALKLKEIAYLHAEGFAAGELKHGPIALVEDGQPVFVIVPSPRGRDSLHAKVVSNIQEIRARGAVTIVIAEEGDTAVDEHANYIIRIPQAPTLMQPLLATVPLQIFACAVATEKGFDVDQPRNLAKSVTVE.

The active-site Nucleophile; for GATase activity is Cys2. The Glutamine amidotransferase type-2 domain occupies 2 to 228; sequence CGIVGYIGQA…NDQVVTITAD (227 aa). SIS domains follow at residues 295 to 435 and 468 to 613; these read IDES…LRGN and LGRS…VDQP. The For Fru-6P isomerization activity role is filled by Lys618.

Homodimer.

It is found in the cytoplasm. The enzyme catalyses D-fructose 6-phosphate + L-glutamine = D-glucosamine 6-phosphate + L-glutamate. In terms of biological role, catalyzes the first step in hexosamine metabolism, converting fructose-6P into glucosamine-6P using glutamine as a nitrogen source. This is Glutamine--fructose-6-phosphate aminotransferase [isomerizing] from Corynebacterium efficiens (strain DSM 44549 / YS-314 / AJ 12310 / JCM 11189 / NBRC 100395).